The sequence spans 249 residues: Transcription factor MYB90 (249 aa).

HTH myb-type domains are found at residues 5 to 57 and 58 to 112; these read SKGL…LNYL and KPSI…SKKH. 2 consecutive DNA-binding regions (H-T-H motif) follow at residues 33–57 and 85–108; these read WHQV…LNYL and WSLI…NTHL.

Interacts with BHLH12/MYC1, BHLH1/GL3/MYC6, BHLH2/EGL3/MYC146, and BHLH42/TT8. In terms of tissue distribution, expressed only in leaves and siliques.

Its subcellular location is the nucleus. Transcription activator, when associated with BHLH12/MYC1, EGL3, or GL3. Promotes the synthesis of phenylpropanoid-derived compounds such as anthocyanins. This chain is Transcription factor MYB90 (MYB90), found in Arabidopsis thaliana (Mouse-ear cress).